The chain runs to 296 residues: Haloalkane dehalogenase (296 aa).

The 125-residue stretch at P31 to R155 folds into the AB hydrolase-1 domain. Chloride is bound at residue N38. The Nucleophile role is filled by D108. W109 contacts chloride. E132 functions as the Proton donor in the catalytic mechanism. The active-site Proton acceptor is H272.

Belongs to the haloalkane dehalogenase family. Type 2 subfamily. In terms of assembly, monomer.

It localises to the periplasm. It catalyses the reaction 1-haloalkane + H2O = a halide anion + a primary alcohol + H(+). The catalysed reaction is (3R,6R)-1,3,4,6-tetrachlorocyclohexa-1,4-diene + 2 H2O = 2,5-dichlorocyclohexa-2,5-dien-1,4-diol + 2 chloride + 2 H(+). The protein operates within xenobiotic degradation; gamma-hexachlorocyclohexane degradation. Competitively inhibited by the key pollutants 1,2-dichloroethane (1,2-DCE) and 1,2-dichloropropane (1,2-DCP). Functionally, catalyzes hydrolytic cleavage of carbon-halogen bonds in halogenated aliphatic compounds, leading to the formation of the corresponding primary alcohols, halide ions and protons. Has a broad substrate specificity since not only monochloroalkanes (C3 to C10) but also dichloroalkanes (&gt; C3), bromoalkanes, and chlorinated aliphatic alcohols are good substrates. Shows almost no activity with 1,2-dichloroethane, but very high activity with the brominated analog. Is involved in the degradation of the important environmental pollutant gamma-hexachlorocyclohexane (gamma-HCH or lindane) as it also catalyzes conversion of 1,3,4,6-tetrachloro-1,4-cyclohexadiene (1,4-TCDN) to 2,5-dichloro-2,5-cyclohexadiene-1,4-diol (2,5-DDOL) via the intermediate 2,4,5-trichloro-2,5-cyclohexadiene-1-ol (2,4,5-DNOL). This degradation pathway allows S.japonicum UT26 to grow on gamma-HCH as the sole source of carbon and energy. The sequence is that of Haloalkane dehalogenase from Sphingobium indicum (strain DSM 16413 / CCM 7287 / MTCC 6362 / UT26 / NBRC 101211 / UT26S) (Sphingobium japonicum).